We begin with the raw amino-acid sequence, 260 residues long: Interleukin-1 receptor-associated kinase 1-binding protein 1 (260 aa).

The tract at residues 30 to 50 (GRETLPGLRHPLSSTQAQTAT) is disordered. The span at 41 to 50 (LSSTQAQTAT) shows a compositional bias: polar residues. 3 positions are modified to phosphoserine: Ser56, Ser62, and Ser235. Thr237 carries the phosphothreonine modification. The segment at 240–260 (AASKVFITFEVKGKEKRKKHL) is required for nuclear localization (NLS). Ser242 carries the post-translational modification Phosphoserine. At Thr247 the chain carries Phosphothreonine.

The protein belongs to the IRAK1BP1 family. As to quaternary structure, interacts with IRAK1 and RELA. Interacts with HSPA8 and HSPA1. Phosphorylation at Ser-56 and/or Ser-62 is required for full activity. Phosphorylated on at least one of Ser-235, Thr-237, Ser-242 and Thr-247 upon TNF-alpha activation, which favors nuclear translocation.

It is found in the cytoplasm. The protein resides in the nucleus. Component of the IRAK1-dependent TNFRSF1A signaling pathway that leads to NF-kappa-B activation and is required for cell survival. Acts by enhancing RELA transcriptional activity. In Homo sapiens (Human), this protein is Interleukin-1 receptor-associated kinase 1-binding protein 1 (IRAK1BP1).